We begin with the raw amino-acid sequence, 276 residues long: Ribosomal RNA small subunit methyltransferase A (276 aa).

S-adenosyl-L-methionine contacts are provided by Asn28, Leu30, Gly55, Glu77, Asp103, and Asn124.

The protein belongs to the class I-like SAM-binding methyltransferase superfamily. rRNA adenine N(6)-methyltransferase family. RsmA subfamily.

It is found in the cytoplasm. It catalyses the reaction adenosine(1518)/adenosine(1519) in 16S rRNA + 4 S-adenosyl-L-methionine = N(6)-dimethyladenosine(1518)/N(6)-dimethyladenosine(1519) in 16S rRNA + 4 S-adenosyl-L-homocysteine + 4 H(+). In terms of biological role, specifically dimethylates two adjacent adenosines (A1518 and A1519) in the loop of a conserved hairpin near the 3'-end of 16S rRNA in the 30S particle. May play a critical role in biogenesis of 30S subunits. This is Ribosomal RNA small subunit methyltransferase A from Agrobacterium fabrum (strain C58 / ATCC 33970) (Agrobacterium tumefaciens (strain C58)).